A 285-amino-acid polypeptide reads, in one-letter code: Bifunctional protein FolD (285 aa).

Residues 164–166, Ile-189, and Ile-230 each bind NADP(+); that span reads GAS.

The protein belongs to the tetrahydrofolate dehydrogenase/cyclohydrolase family. Homodimer.

It catalyses the reaction (6R)-5,10-methylene-5,6,7,8-tetrahydrofolate + NADP(+) = (6R)-5,10-methenyltetrahydrofolate + NADPH. It carries out the reaction (6R)-5,10-methenyltetrahydrofolate + H2O = (6R)-10-formyltetrahydrofolate + H(+). It participates in one-carbon metabolism; tetrahydrofolate interconversion. Its function is as follows. Catalyzes the oxidation of 5,10-methylenetetrahydrofolate to 5,10-methenyltetrahydrofolate and then the hydrolysis of 5,10-methenyltetrahydrofolate to 10-formyltetrahydrofolate. The chain is Bifunctional protein FolD from Sulfurimonas denitrificans (strain ATCC 33889 / DSM 1251) (Thiomicrospira denitrificans (strain ATCC 33889 / DSM 1251)).